Consider the following 247-residue polypeptide: Probable transcriptional regulatory protein lpl1249 (247 aa).

Belongs to the TACO1 family.

It is found in the cytoplasm. The protein is Probable transcriptional regulatory protein lpl1249 of Legionella pneumophila (strain Lens).